Consider the following 198-residue polypeptide: Protein GrpE (198 aa).

The protein belongs to the GrpE family. Homodimer.

It localises to the cytoplasm. Functionally, participates actively in the response to hyperosmotic and heat shock by preventing the aggregation of stress-denatured proteins, in association with DnaK and GrpE. It is the nucleotide exchange factor for DnaK and may function as a thermosensor. Unfolded proteins bind initially to DnaJ; upon interaction with the DnaJ-bound protein, DnaK hydrolyzes its bound ATP, resulting in the formation of a stable complex. GrpE releases ADP from DnaK; ATP binding to DnaK triggers the release of the substrate protein, thus completing the reaction cycle. Several rounds of ATP-dependent interactions between DnaJ, DnaK and GrpE are required for fully efficient folding. This Baumannia cicadellinicola subsp. Homalodisca coagulata protein is Protein GrpE.